The chain runs to 326 residues: NDRG-like protein (326 aa).

The protein belongs to the NDRG family.

This Dictyostelium discoideum (Social amoeba) protein is NDRG-like protein.